A 1006-amino-acid polypeptide reads, in one-letter code: Probable beta-galactosidase A (1006 aa).

The first 18 residues, 1 to 18 (MKLLSVCAVALLAAQAAG), serve as a signal peptide directing secretion. Tyr96, Asn140, Ala141, and Glu142 together coordinate substrate. A glycan (N-linked (GlcNAc...) asparagine) is linked at Asn156. Substrate is bound at residue Asn199. Glu200 serves as the catalytic Proton donor. An intrachain disulfide couples Cys205 to Cys206. N-linked (GlcNAc...) asparagine glycosylation is present at Asn207. Tyr260 serves as a coordination point for substrate. Cysteines 266 and 315 form a disulfide. Glu298 functions as the Nucleophile in the catalytic mechanism. Tyr364 contributes to the substrate binding site. N-linked (GlcNAc...) asparagine glycosylation is found at Asn373, Asn402, Asn422, Asn622, Asn777, and Asn914.

The protein belongs to the glycosyl hydrolase 35 family.

It localises to the secreted. The enzyme catalyses Hydrolysis of terminal non-reducing beta-D-galactose residues in beta-D-galactosides.. Functionally, cleaves beta-linked terminal galactosyl residues from gangliosides, glycoproteins, and glycosaminoglycans. The polypeptide is Probable beta-galactosidase A (lacA) (Neosartorya fischeri (strain ATCC 1020 / DSM 3700 / CBS 544.65 / FGSC A1164 / JCM 1740 / NRRL 181 / WB 181) (Aspergillus fischerianus)).